Consider the following 208-residue polypeptide: NAD(P)H-quinone oxidoreductase subunit I (208 aa).

2 4Fe-4S ferredoxin-type domains span residues 55–84 and 95–124; these read GRIH…VDWV and RNYS…MTEE. [4Fe-4S] cluster is bound by residues Cys64, Cys67, Cys70, Cys74, Cys104, Cys107, Cys110, and Cys114.

Belongs to the complex I 23 kDa subunit family. In terms of assembly, NDH-1 is composed of at least 11 different subunits. [4Fe-4S] cluster serves as cofactor.

The protein resides in the cellular thylakoid membrane. It carries out the reaction a plastoquinone + NADH + (n+1) H(+)(in) = a plastoquinol + NAD(+) + n H(+)(out). The enzyme catalyses a plastoquinone + NADPH + (n+1) H(+)(in) = a plastoquinol + NADP(+) + n H(+)(out). In terms of biological role, NDH-1 shuttles electrons from an unknown electron donor, via FMN and iron-sulfur (Fe-S) centers, to quinones in the respiratory and/or the photosynthetic chain. The immediate electron acceptor for the enzyme in this species is believed to be plastoquinone. Couples the redox reaction to proton translocation, and thus conserves the redox energy in a proton gradient. The polypeptide is NAD(P)H-quinone oxidoreductase subunit I (Prochlorococcus marinus (strain MIT 9301)).